Consider the following 162-residue polypeptide: Shikimate kinase (162 aa).

11–16 contacts ATP; it reads GSGKSS. Mg(2+) is bound at residue serine 15. Residues aspartate 33, arginine 57, and glycine 80 each coordinate substrate. ATP is bound at residue arginine 116. A substrate-binding site is contributed by arginine 132.

It belongs to the shikimate kinase family. Monomer. Mg(2+) is required as a cofactor.

It localises to the cytoplasm. The catalysed reaction is shikimate + ATP = 3-phosphoshikimate + ADP + H(+). It functions in the pathway metabolic intermediate biosynthesis; chorismate biosynthesis; chorismate from D-erythrose 4-phosphate and phosphoenolpyruvate: step 5/7. Catalyzes the specific phosphorylation of the 3-hydroxyl group of shikimic acid using ATP as a cosubstrate. The sequence is that of Shikimate kinase from Helicobacter acinonychis (strain Sheeba).